Reading from the N-terminus, the 1487-residue chain is Major viral transcription factor ICP4 homolog (1487 aa).

3 disordered regions span residues 41-295 (AAPD…LPPG), 310-370 (LAKT…AEEA), and 803-1007 (PPTR…HTPR). Over residues 66 to 75 (VIPPPSPAPE) the composition is skewed to pro residues. 2 stretches are compositionally biased toward low complexity: residues 165 to 193 (PSSA…SSSS) and 201 to 213 (DGAG…SSSS). Acidic residues predominate over residues 214–224 (DDSDSDEGGEE). Low complexity predominate over residues 235 to 272 (AAKTPSAAGSPGPSSGGDRPAAGAATPKSCRSGAASPG). Positions 273 to 285 (APAPAPASAPAPS) are enriched in pro residues. 3 stretches are compositionally biased toward low complexity: residues 807–829 (SQQP…AEGS), 849–860 (PSSHSQSPQHSQ), and 867–877 (ATTATCCRATQ). Positions 878 to 893 (TNARSRGQQHQPQKAR) are enriched in polar residues. Positions 920–929 (HGRPRGKSGK) are enriched in basic residues. A compositionally biased stretch (low complexity) spans 938 to 951 (AAQAGASASFSSSA). The segment covering 988–1007 (GPDRRGGFRRVPRGDCHTPR) has biased composition (basic and acidic residues).

It belongs to the herpesviridae ICP4 family. In terms of processing, a long stretch of serine residues may be a major site of phosphorylation.

The protein localises to the host nucleus. This IE protein is a multifunctional protein capable of migrating to the nucleus, binding to DNA, trans-activating other viral genes, and autoregulating its own synthesis. In Equus caballus (Horse), this protein is Major viral transcription factor ICP4 homolog (IE).